A 387-amino-acid polypeptide reads, in one-letter code: Apoptosis-inducing factor homolog B (387 aa).

FAD is bound by residues 12–16 (GGGYG), Arg47, and Asp292.

It belongs to the FAD-dependent oxidoreductase family. FAD serves as cofactor.

Functionally, putative FAD-dependent oxidoreductase. This chain is Apoptosis-inducing factor homolog B (aifB), found in Dictyostelium discoideum (Social amoeba).